The chain runs to 447 residues: Oxysterols receptor LXR-alpha (447 aa).

2 disordered regions span residues 1 to 37 (MSLW…GGSS) and 65 to 88 (ALLT…KKGP). The tract at residues 1–96 (MSLWLGAPVP…GPAPKMLGNE (96 aa)) is transactivation AF-1; required for ligand-independent transactivation function. Positions 24–37 (GAQDASSQAQGGSS) are enriched in low complexity. Positions 95–170 (NELCSVCGDK…AGMREECVLS (76 aa)) form a DNA-binding region, nuclear receptor. 2 NR C4-type zinc fingers span residues 98 to 118 (CSVC…CEGC) and 134 to 158 (CHSG…LRKC). Positions 180-202 (KRQEEEQAHATSLPPRASSPPQI) are disordered. A transactivation AF-2; required for ligand-dependent transactivation function; mediates interaction with CCAR2 region spans residues 205–447 (QLSPEQLGMI…LLSEIWDVHE (243 aa)). Positions 209–447 (EQLGMIEKLV…LLSEIWDVHE (239 aa)) constitute an NR LBD domain.

The protein belongs to the nuclear hormone receptor family. NR1 subfamily. Heterodimer of NR1H3 and RXR (retinoic acid receptor). Interacts with CCAR2 (via N-terminus) in a ligand-independent manner. Interacts with SIRT1 and this interaction is inhibited by CCAR2. Interacts with GPS2. In terms of processing, ubiquitinated by UBR5, leading to its degradation: UBR5 specifically recognizes and binds ligand-bound NR1H3 when it is not associated with coactivators (NCOAs). In presence of NCOAs, the UBR5-degron is not accessible, preventing its ubiquitination and degradation. In terms of tissue distribution, visceral organs specific expression. Strong expression was found in liver, kidney and intestine followed by spleen and to a lesser extent the adrenals.

It localises to the nucleus. It is found in the cytoplasm. Functionally, nuclear receptor that exhibits a ligand-dependent transcriptional activation activity. Interaction with retinoic acid receptor (RXR) shifts RXR from its role as a silent DNA-binding partner to an active ligand-binding subunit in mediating retinoid responses through target genes defined by LXRES. LXRES are DR4-type response elements characterized by direct repeats of two similar hexanuclotide half-sites spaced by four nucleotides. Plays an important role in the regulation of cholesterol homeostasis, regulating cholesterol uptake through MYLIP-dependent ubiquitination of LDLR, VLDLR and LRP8. Interplays functionally with RORA for the regulation of genes involved in liver metabolism. Induces LPCAT3-dependent phospholipid remodeling in endoplasmic reticulum (ER) membranes of hepatocytes, driving SREBF1 processing and lipogenesis. Via LPCAT3, triggers the incorporation of arachidonate into phosphatidylcholines of ER membranes, increasing membrane dynamics and enabling triacylglycerols transfer to nascent very low-density lipoprotein (VLDL) particles. Via LPCAT3 also counteracts lipid-induced ER stress response and inflammation, likely by modulating SRC kinase membrane compartmentalization and limiting the synthesis of lipid inflammatory mediators. This Homo sapiens (Human) protein is Oxysterols receptor LXR-alpha (NR1H3).